We begin with the raw amino-acid sequence, 139 residues long: Translation initiation factor 2 subunit beta (139 aa).

Belongs to the eIF-2-beta/eIF-5 family. In terms of assembly, heterotrimer composed of an alpha, a beta and a gamma chain.

Its function is as follows. eIF-2 functions in the early steps of protein synthesis by forming a ternary complex with GTP and initiator tRNA. This Methanococcus aeolicus (strain ATCC BAA-1280 / DSM 17508 / OCM 812 / Nankai-3) protein is Translation initiation factor 2 subunit beta.